The sequence spans 333 residues: Holliday junction branch migration complex subunit RuvB (333 aa).

The large ATPase domain (RuvB-L) stretch occupies residues 1 to 182; sequence MDERLLSGES…FGVLSRLEYY (182 aa). ATP-binding positions include L21, R22, G63, K66, T67, T68, 129-131, R172, Y182, and R219; that span reads EDF. T67 is a Mg(2+) binding site. The interval 183-253 is small ATPAse domain (RuvB-S); it reads TVDQLSAIVE…ITQMALELLQ (71 aa). The head domain (RuvB-H) stretch occupies residues 256–333; that stretch reads KLGLDHIDHK…EHFGMEMPKV (78 aa). Residues R311 and R316 each contribute to the DNA site.

It belongs to the RuvB family. Homohexamer. Forms an RuvA(8)-RuvB(12)-Holliday junction (HJ) complex. HJ DNA is sandwiched between 2 RuvA tetramers; dsDNA enters through RuvA and exits via RuvB. An RuvB hexamer assembles on each DNA strand where it exits the tetramer. Each RuvB hexamer is contacted by two RuvA subunits (via domain III) on 2 adjacent RuvB subunits; this complex drives branch migration. In the full resolvosome a probable DNA-RuvA(4)-RuvB(12)-RuvC(2) complex forms which resolves the HJ.

Its subcellular location is the cytoplasm. It catalyses the reaction ATP + H2O = ADP + phosphate + H(+). The RuvA-RuvB-RuvC complex processes Holliday junction (HJ) DNA during genetic recombination and DNA repair, while the RuvA-RuvB complex plays an important role in the rescue of blocked DNA replication forks via replication fork reversal (RFR). RuvA specifically binds to HJ cruciform DNA, conferring on it an open structure. The RuvB hexamer acts as an ATP-dependent pump, pulling dsDNA into and through the RuvAB complex. RuvB forms 2 homohexamers on either side of HJ DNA bound by 1 or 2 RuvA tetramers; 4 subunits per hexamer contact DNA at a time. Coordinated motions by a converter formed by DNA-disengaged RuvB subunits stimulates ATP hydrolysis and nucleotide exchange. Immobilization of the converter enables RuvB to convert the ATP-contained energy into a lever motion, pulling 2 nucleotides of DNA out of the RuvA tetramer per ATP hydrolyzed, thus driving DNA branch migration. The RuvB motors rotate together with the DNA substrate, which together with the progressing nucleotide cycle form the mechanistic basis for DNA recombination by continuous HJ branch migration. Branch migration allows RuvC to scan DNA until it finds its consensus sequence, where it cleaves and resolves cruciform DNA. This Bacillus cereus (strain 03BB102) protein is Holliday junction branch migration complex subunit RuvB.